Consider the following 401-residue polypeptide: Anhydro-N-acetylmuramic acid kinase (401 aa).

25–32 (GTSLDGLD) lines the ATP pocket.

Belongs to the anhydro-N-acetylmuramic acid kinase family.

It carries out the reaction 1,6-anhydro-N-acetyl-beta-muramate + ATP + H2O = N-acetyl-D-muramate 6-phosphate + ADP + H(+). It functions in the pathway amino-sugar metabolism; 1,6-anhydro-N-acetylmuramate degradation. The protein operates within cell wall biogenesis; peptidoglycan recycling. Functionally, catalyzes the specific phosphorylation of 1,6-anhydro-N-acetylmuramic acid (anhMurNAc) with the simultaneous cleavage of the 1,6-anhydro ring, generating MurNAc-6-P. Is required for the utilization of anhMurNAc either imported from the medium or derived from its own cell wall murein, and thus plays a role in cell wall recycling. The chain is Anhydro-N-acetylmuramic acid kinase from Pseudoalteromonas atlantica (strain T6c / ATCC BAA-1087).